Here is a 131-residue protein sequence, read N- to C-terminus: MVTLFTSPSCTSCRKAKAWLQEHDIPYTERNIFSEHLTIDEIKQILKMTEDGTDEIISTRSKTYQKLNVDIDSLPLQDLYSIIQDNPGLLRRPIILDDKRLQVGYNEDEIRRFLPRKVRTFQLQEAQRLVD.

The cysteines at positions 10 and 13 are disulfide-linked.

This sequence belongs to the ArsC family. Spx subfamily. Interacts with the C-terminal domain of the alpha subunit of the RNAP.

The protein resides in the cytoplasm. In terms of biological role, global transcriptional regulator that plays a key role in stress response and exerts either positive or negative regulation of genes. Acts by interacting with the C-terminal domain of the alpha subunit of the RNA polymerase (RNAP). This interaction can enhance binding of RNAP to the promoter region of target genes and stimulate their transcription, or block interaction of RNAP with activator. The polypeptide is Global transcriptional regulator Spx (Staphylococcus epidermidis (strain ATCC 35984 / DSM 28319 / BCRC 17069 / CCUG 31568 / BM 3577 / RP62A)).